A 27-amino-acid chain; its full sequence is Small integral membrane protein 43 (27 aa).

Residues 15–21 (HREPWGF) form an important for interaction with SLC2A1 and SLC2A3 region.

Interacts with glucose transporters SLC2A1/GLUT1 and SLC2A3/GLUT3; the interactions may promote SLC2A1- and SLC2A3-mediated glucose transport to meet the energy needs of mesendoderm differentiation.

The protein localises to the cell membrane. Required for mesendoderm differentiation. Interacts with glucose transporters and promotes glucose uptake. Probably augments the glucose uptake capacity of glucose transporter proteins to meet the energy needs of mesendoderm differentiation. The protein is Small integral membrane protein 43 of Pongo abelii (Sumatran orangutan).